A 70-amino-acid chain; its full sequence is Conotoxin Im23.4 (70 aa).

Positions 1–22 (MIMRMTLTLFVLVVMTAASASG) are cleaved as a signal peptide. The propeptide occupies 23–30 (DALTEAKR). 3 disulfide bridges follow: Cys34–Cys41, Cys45–Cys53, and Cys54–Cys69.

It belongs to the conotoxin K superfamily. Expressed by the venom duct.

It is found in the secreted. Functionally, probable neurotoxin. The sequence is that of Conotoxin Im23.4 from Conus imperialis (Imperial cone).